The following is a 441-amino-acid chain: Fibroleukin (441 aa).

Positions 1-15 (MKLANWCWLSSTVLA) are cleaved as a signal peptide. The N-linked (GlcNAc...) asparagine glycan is linked to Asn25. A coiled-coil region spans residues 73-167 (SRIEEVFKEV…LEKLNLVNMN (95 aa)). The disordered stretch occupies residues 102 to 128 (QADDSRDPGRNGLLLPGTGAPGETGDN). Asn179, Asn237, Asn265, and Asn338 each carry an N-linked (GlcNAc...) asparagine glycan. A Fibrinogen C-terminal domain is found at 206–438 (VQQHLIYKDC…EVKMMIRPKH (233 aa)).

In terms of assembly, homotetramer; disulfide-linked.

It localises to the secreted. Functionally, may play a role in physiologic lymphocyte functions at mucosal sites. This chain is Fibroleukin (FGL2), found in Bos taurus (Bovine).